Here is a 290-residue protein sequence, read N- to C-terminus: tRNA pseudouridine synthase A (290 aa).

The active-site Nucleophile is Asp-56. Tyr-109 provides a ligand contact to substrate.

Belongs to the tRNA pseudouridine synthase TruA family.

It carries out the reaction uridine(38/39/40) in tRNA = pseudouridine(38/39/40) in tRNA. Its function is as follows. Formation of pseudouridine at positions 38, 39 and 40 in the anticodon stem and loop of transfer RNAs. This is tRNA pseudouridine synthase A from Methanobrevibacter smithii (strain ATCC 35061 / DSM 861 / OCM 144 / PS).